We begin with the raw amino-acid sequence, 277 residues long: Phosphate import ATP-binding protein PstB 1 (277 aa).

The region spanning 27–272 is the ABC transporter domain; sequence LRVRDLAVSY…PSHELTAAYI (246 aa). 59 to 66 is an ATP binding site; the sequence is GPSGCGKT.

It belongs to the ABC transporter superfamily. Phosphate importer (TC 3.A.1.7) family. As to quaternary structure, the complex is composed of two ATP-binding proteins (PstB), two transmembrane proteins (PstC and PstA) and a solute-binding protein (PstS).

Its subcellular location is the cell inner membrane. The catalysed reaction is phosphate(out) + ATP + H2O = ADP + 2 phosphate(in) + H(+). Functionally, part of the ABC transporter complex PstSACB involved in phosphate import. Responsible for energy coupling to the transport system. In Nitrosococcus oceani (strain ATCC 19707 / BCRC 17464 / JCM 30415 / NCIMB 11848 / C-107), this protein is Phosphate import ATP-binding protein PstB 1.